The chain runs to 148 residues: 3-dehydroquinate dehydratase (148 aa).

Tyrosine 23 acts as the Proton acceptor in catalysis. Positions 75, 81, and 88 each coordinate substrate. The active-site Proton donor is histidine 101. Residues 102-103 and arginine 112 each bind substrate; that span reads LS.

It belongs to the type-II 3-dehydroquinase family. Homododecamer.

It carries out the reaction 3-dehydroquinate = 3-dehydroshikimate + H2O. It participates in metabolic intermediate biosynthesis; chorismate biosynthesis; chorismate from D-erythrose 4-phosphate and phosphoenolpyruvate: step 3/7. Its function is as follows. Catalyzes a trans-dehydration via an enolate intermediate. This chain is 3-dehydroquinate dehydratase, found in Halorhodospira halophila (strain DSM 244 / SL1) (Ectothiorhodospira halophila (strain DSM 244 / SL1)).